The primary structure comprises 767 residues: DNA topoisomerase 1 (767 aa).

The segment covering 1–23 (MSGDHLHNDSQIEADFRLNDSHK) has biased composition (basic and acidic residues). Residues 1–201 (MSGDHLHNDS…NKKKKPKKEE (201 aa)) form a disordered region. Ser2 carries the N-acetylserine modification. Ser2 and Ser10 each carry phosphoserine. Residues 24–39 (HKDKHKDREHRHKEHK) are compositionally biased toward basic residues. Basic and acidic residues predominate over residues 40-110 (KDKDKDREKS…DAKIKKEKEN (71 aa)). Phosphoserine is present on Ser59. Lys103 participates in a covalent cross-link: Glycyl lysine isopeptide (Lys-Gly) (interchain with G-Cter in SUMO2). Lys105 is covalently cross-linked (Glycyl lysine isopeptide (Lys-Gly) (interchain with G-Cter in SUMO); alternate). A Glycyl lysine isopeptide (Lys-Gly) (interchain with G-Cter in SUMO2); alternate cross-link involves residue Lys105. Residue Ser114 is modified to Phosphoserine. Residue Lys119 forms a Glycyl lysine isopeptide (Lys-Gly) (interchain with G-Cter in SUMO); alternate linkage. Lys119 is covalently cross-linked (Glycyl lysine isopeptide (Lys-Gly) (interchain with G-Cter in SUMO2); alternate). Lys119 is covalently cross-linked (Glycyl lysine isopeptide (Lys-Gly) (interchain with G-Cter in SUMO1); alternate). The span at 131 to 168 (PKEDIKPLKRLRDEDDADYKPKKIKTEDIKKEKKRKSE) shows a compositional bias: basic and acidic residues. Residues Lys136 and Lys150 each participate in a glycyl lysine isopeptide (Lys-Gly) (interchain with G-Cter in SUMO2) cross-link. Residue Lys155 forms a Glycyl lysine isopeptide (Lys-Gly) (interchain with G-Cter in SUMO); alternate linkage. Residue Lys155 forms a Glycyl lysine isopeptide (Lys-Gly) (interchain with G-Cter in SUMO2); alternate linkage. Glycyl lysine isopeptide (Lys-Gly) (interchain with G-Cter in SUMO2) cross-links involve residues Lys160 and Lys166. Lys174 is covalently cross-linked (Glycyl lysine isopeptide (Lys-Gly) (interchain with G-Cter in SUMO2); alternate). N6-acetyllysine; alternate is present on Lys174. The span at 181–201 (KDKDKKVAEPDNKKKKPKKEE) shows a compositional bias: basic and acidic residues. A Glycyl lysine isopeptide (Lys-Gly) (interchain with G-Cter in SUMO2) cross-link involves residue Lys206. Lys282 is subject to N6-acetyllysine. Lys338 is covalently cross-linked (Glycyl lysine isopeptide (Lys-Gly) (interchain with G-Cter in SUMO2)). 2 interaction with DNA regions span residues 427 to 428 (KY) and 490 to 495 (RAGNEK). The region spanning 434 to 767 (SSRIKGEKDW…IDMTDEDYEF (334 aa)) is the Topo IB-type catalytic domain. Phosphoserine; by CK2 is present on Ser508. Lys551 participates in a covalent cross-link: Glycyl lysine isopeptide (Lys-Gly) (interchain with G-Cter in SUMO2). Residues 587-589 (TAK) are interaction with DNA. Residues Lys644, Lys702, and Lys714 each participate in a glycyl lysine isopeptide (Lys-Gly) (interchain with G-Cter in SUMO2) cross-link. Residue Tyr725 is the O-(3'-phospho-DNA)-tyrosine intermediate of the active site.

Belongs to the type IB topoisomerase family. Monomer. Interacts with ERCC6. Interacts with TPRN; TPRN interacts with a number of DNA damage response proteins, is recruited to sites of DNA damage and may play a role in DNA damage repair. Post-translationally, sumoylated. Lys-119 is the main site of sumoylation. Sumoylation plays a role in partitioning TOP1 between nucleoli and nucleoplasm. Levels are dramatically increased on camptothecin (CPT) treatment. Phosphorylation at Ser-508 by CK2 increases binding to supercoiled DNA and sensitivity to camptothecin.

It is found in the nucleus. Its subcellular location is the nucleolus. It localises to the nucleoplasm. It carries out the reaction ATP-independent breakage of single-stranded DNA, followed by passage and rejoining.. Functionally, releases the supercoiling and torsional tension of DNA introduced during the DNA replication and transcription by transiently cleaving and rejoining one strand of the DNA duplex. Introduces a single-strand break via transesterification at a target site in duplex DNA. The scissile phosphodiester is attacked by the catalytic tyrosine of the enzyme, resulting in the formation of a DNA-(3'-phosphotyrosyl)-enzyme intermediate and the expulsion of a 5'-OH DNA strand. The free DNA strand then rotates around the intact phosphodiester bond on the opposing strand, thus removing DNA supercoils. Finally, in the religation step, the DNA 5'-OH attacks the covalent intermediate to expel the active-site tyrosine and restore the DNA phosphodiester backbone. Regulates the alternative splicing of tissue factor (F3) pre-mRNA in endothelial cells. Involved in the circadian transcription of the core circadian clock component BMAL1 by altering the chromatin structure around the ROR response elements (ROREs) on the BMAL1 promoter. This is DNA topoisomerase 1 (Top1) from Mus musculus (Mouse).